Reading from the N-terminus, the 708-residue chain is Lactotransferrin (708 aa).

The first 19 residues, 1–19, serve as a signal peptide directing secretion; that stretch reads MKLFVPALLSLGALGLCLA. Transferrin-like domains lie at 25 to 352 and 364 to 693; these read VRWC…NLRE and VVWC…NLKK. 2 cysteine pairs are disulfide-bonded: C28–C64 and C38–C55. D79 is a binding site for Fe cation. The active site involves K92. Y111 is a Fe cation binding site. 5 disulfides stabilise this stretch: C134–C217, C176–C192, C179–C202, C189–C200, and C250–C264. 4 residues coordinate hydrogencarbonate: T136, R140, A142, and G143. Y211 serves as a coordination point for Fe cation. Residue N252 is glycosylated (N-linked (GlcNAc...) (high mannose) asparagine). H272 provides a ligand contact to Fe cation. The active-site Nucleophile is S278. A glycan (N-linked (GlcNAc...) (hybrid) asparagine) is linked at N300. 2 disulfide bridges follow: C367–C399 and C377–C390. Fe cation contacts are provided by D414 and Y452. Intrachain disulfides connect C424-C703, C444-C666, C476-C551, C500-C694, C510-C524, C521-C534, C592-C606, and C644-C649. The hydrogencarbonate site is built by T478, R482, A484, and G485. N495 carries an N-linked (GlcNAc...) (complex) asparagine; alternate glycan. A glycan (N-linked (GlcNAc...) (high mannose) asparagine; alternate) is linked at N495. A glycan (N-linked (GlcNAc...) (hybrid) asparagine; alternate) is linked at N495. Y545 provides a ligand contact to Fe cation. N564 carries an N-linked (GlcNAc...) (high mannose) asparagine glycan. Position 614 (H614) interacts with Fe cation.

It belongs to the transferrin family. In terms of assembly, monomer. Found in a complex with LTF, CLU, EPPIN and SEMG1. Found in a complex with MPO and LTF; interacts directly with CP, allows Fe(3+) incorporation into LTF and activation of CP ferroxidase activity. In terms of processing, poly-N-acetyllactosaminic carbohydrate moiety seems to be needed for TLR4 activation.

The protein localises to the secreted. The protein resides in the cytoplasmic granule. Its function is as follows. Transferrins are iron binding transport proteins which can bind two Fe(3+) ions in association with the binding of an anion, usually bicarbonate. Functionally, major iron-binding and multifunctional protein found in exocrine fluids such as breast milk and mucosal secretions. Has antimicrobial activity, which depends on the extracellular cation concentration. Antimicrobial properties include bacteriostasis, which is related to its ability to sequester free iron and thus inhibit microbial growth, as well as direct bactericidal properties leading to the release of lipopolysaccharides from the bacterial outer membrane. Can also prevent bacterial biofilm development in P.aeruginosa infection. Has weak antifungal activity against C.albicans. Has anabolic, differentiating and anti-apoptotic effects on osteoblasts and can also inhibit osteoclastogenesis, possibly playing a role in the regulation of bone growth. Promotes binding of species C adenoviruses to epithelial cells, promoting adenovirus infection. Can inhibit papillomavirus infections. Stimulates the TLR4 signaling pathway leading to NF-kappa-B activation and subsequent pro-inflammatory cytokine production while also interfering with the lipopolysaccharide (LPS)-stimulated TLR4 signaling. Inhibits neutrophil granulocyte migration to sites of apoptosis, when secreted by apoptotic cells. Stimulates VEGFA-mediated endothelial cell migration and proliferation. Binds heparin, chondroitin sulfate and possibly other glycosaminoglycans (GAGs). Also binds specifically to pneumococcal surface protein A (PspA), the lipid A portion of bacterial lipopolysaccharide (LPS), lysozyme and DNA. Lactoferricin binds to the bacterial surface and is crucial for the bactericidal functions. Has some antiviral activity against papillomavirus infection. N-terminal region shows strong antifungal activity against C.albicans. Contains two BBXB heparin-binding consensus sequences that appear to form the predominate functional GAG-binding site. In terms of biological role, the lactotransferrin transferrin-like domain 1 functions as a serine protease of the peptidase S60 family that cuts arginine rich regions. This function contributes to the antimicrobial activity. Shows a preferential cleavage at -Arg-Ser-Arg-Arg-|- and -Arg-Arg-Ser-Arg-|-, and of Z-Phe-Arg-|-aminomethylcoumarin sites. This is Lactotransferrin (LTF) from Bubalus bubalis (Domestic water buffalo).